The sequence spans 395 residues: S-adenosylmethionine synthase (395 aa).

His-16 contributes to the ATP binding site. A Mg(2+)-binding site is contributed by Asp-18. Residue Glu-44 coordinates K(+). 2 residues coordinate L-methionine: Glu-57 and Gln-100. The segment at 100 to 110 (QSTDIAQGVNE) is flexible loop. Residues 174 to 176 (DAK), 241 to 242 (RF), Asp-250, 256 to 257 (RK), Ala-273, and Lys-277 contribute to the ATP site. Residue Asp-250 coordinates L-methionine. Lys-281 is a binding site for L-methionine.

It belongs to the AdoMet synthase family. As to quaternary structure, homotetramer; dimer of dimers. It depends on Mg(2+) as a cofactor. K(+) serves as cofactor.

It localises to the cytoplasm. It catalyses the reaction L-methionine + ATP + H2O = S-adenosyl-L-methionine + phosphate + diphosphate. Its pathway is amino-acid biosynthesis; S-adenosyl-L-methionine biosynthesis; S-adenosyl-L-methionine from L-methionine: step 1/1. Its function is as follows. Catalyzes the formation of S-adenosylmethionine (AdoMet) from methionine and ATP. The overall synthetic reaction is composed of two sequential steps, AdoMet formation and the subsequent tripolyphosphate hydrolysis which occurs prior to release of AdoMet from the enzyme. In Streptococcus uberis (strain ATCC BAA-854 / 0140J), this protein is S-adenosylmethionine synthase.